Reading from the N-terminus, the 215-residue chain is Formate dehydrogenase subunit beta (215 aa).

The 4Fe-4S ferredoxin-type 1 domain maps to 3–32 (KGFFVDTTRCTACRGCQVACKQWHGNPATP). 12 residues coordinate [4Fe-4S] cluster: Cys12, Cys15, Cys18, Cys22, Cys73, Cys76, Cys81, Cys121, Cys138, Cys141, Cys153, and Cys157. Residues 129 to 168 (VAESNQMAKCDMCIDRITNGLRPACVTSCPTGAMNFGDLS) enclose the 4Fe-4S ferredoxin-type 2 domain.

In terms of assembly, heterodimer of alpha (FdhA) and beta (FdhB) subunits. [4Fe-4S] cluster is required as a cofactor.

The protein resides in the periplasm. Functionally, beta chain of the formate dehydrogenase (FDH) catalyzes the reversible two-electron oxidation of formate to carbon dioxide. FDH loses activity in the presence of air, but this activity can be restored. This chain is an electron transfer unit. In Megalodesulfovibrio gigas (strain ATCC 19364 / DSM 1382 / NCIMB 9332 / VKM B-1759) (Desulfovibrio gigas), this protein is Formate dehydrogenase subunit beta.